We begin with the raw amino-acid sequence, 235 residues long: Uridylate kinase (235 aa).

9 to 12 lines the ATP pocket; that stretch reads KLSG. Gly-51 provides a ligand contact to UMP. The ATP site is built by Gly-52 and Arg-56. Residues Asp-71 and 132-139 contribute to the UMP site; that span reads TGNPYFTT. Thr-159, Tyr-165, and Asp-168 together coordinate ATP.

Belongs to the UMP kinase family. As to quaternary structure, homohexamer.

It localises to the cytoplasm. It carries out the reaction UMP + ATP = UDP + ADP. It functions in the pathway pyrimidine metabolism; CTP biosynthesis via de novo pathway; UDP from UMP (UMPK route): step 1/1. With respect to regulation, inhibited by UTP. Its function is as follows. Catalyzes the reversible phosphorylation of UMP to UDP. The polypeptide is Uridylate kinase (Flavobacterium psychrophilum (strain ATCC 49511 / DSM 21280 / CIP 103535 / JIP02/86)).